A 209-amino-acid chain; its full sequence is Large ribosomal subunit protein uL4 (209 aa).

The protein belongs to the universal ribosomal protein uL4 family. In terms of assembly, part of the 50S ribosomal subunit.

Its function is as follows. One of the primary rRNA binding proteins, this protein initially binds near the 5'-end of the 23S rRNA. It is important during the early stages of 50S assembly. It makes multiple contacts with different domains of the 23S rRNA in the assembled 50S subunit and ribosome. Forms part of the polypeptide exit tunnel. The sequence is that of Large ribosomal subunit protein uL4 from Borrelia duttonii (strain Ly).